Here is a 212-residue protein sequence, read N- to C-terminus: RING-H2 finger protein ATL68 (212 aa).

The chain crosses the membrane as a helical span at residues 24-44 (LGLGYSIAIALGFLVLISTII). The RING-type; atypical zinc finger occupies 136–178 (CSICLCEYMEEEMLRMMPECKHYFHVYCLDAWLKLNGSCPVCR). The tract at residues 182–212 (LPTPQSTPQSTPLSEVVPLSQYAADRRRSRR) is disordered. Over residues 185–195 (PQSTPQSTPLS) the composition is skewed to low complexity.

It belongs to the RING-type zinc finger family. ATL subfamily.

The protein resides in the membrane. The catalysed reaction is S-ubiquitinyl-[E2 ubiquitin-conjugating enzyme]-L-cysteine + [acceptor protein]-L-lysine = [E2 ubiquitin-conjugating enzyme]-L-cysteine + N(6)-ubiquitinyl-[acceptor protein]-L-lysine.. It functions in the pathway protein modification; protein ubiquitination. In Arabidopsis thaliana (Mouse-ear cress), this protein is RING-H2 finger protein ATL68 (ATL68).